Consider the following 274-residue polypeptide: Large ribosomal subunit protein uL2cz/uL2cy (274 aa).

The interval 224 to 252 (NPVDHPHGGGEGRAPIGRKKPVTPWGYPA) is disordered.

It belongs to the universal ribosomal protein uL2 family. Part of the 50S ribosomal subunit.

It localises to the plastid. The protein resides in the chloroplast. The polypeptide is Large ribosomal subunit protein uL2cz/uL2cy (rpl2-A) (Capsella bursa-pastoris (Shepherd's purse)).